We begin with the raw amino-acid sequence, 530 residues long: Alpha-(1,3)-fucosyltransferase 4 (530 aa).

Disordered stretches follow at residues 1-48 (MRRL…RAVP) and 66-112 (HLGG…STPA). Residues 1 to 147 (MRRLWGAARK…GGRRGWRRGR (147 aa)) lie on the Cytoplasmic side of the membrane. Residues 88–106 (ASGERQRRLEPQLQHESRC) show a composition bias toward basic and acidic residues. The chain crosses the membrane as a helical; Signal-anchor for type II membrane protein span at residues 148–172 (GLPWTVCVLAAAGLTCTALITYACW). Over 173 to 530 (GQLPPLPWAS…IRNLASWFER (358 aa)) the chain is Lumenal. 2 N-linked (GlcNAc...) asparagine glycosylation sites follow: N216 and N315.

Belongs to the glycosyltransferase 10 family. As to expression, expressed at low levels in bone marrow-derived mesenchymal stem cells. In terms of tissue distribution, expressed in cord blood immature promyelocytes and in peripheral blood myeloid and lymphoid cell populations.

It localises to the golgi apparatus. The protein localises to the golgi stack membrane. The enzyme catalyses a beta-D-galactosyl-(1-&gt;4)-N-acetyl-beta-D-glucosaminyl derivative + GDP-beta-L-fucose = a beta-D-galactosyl-(1-&gt;4)-[alpha-L-fucosyl-(1-&gt;3)]-N-acetyl-beta-D-glucosaminyl derivative + GDP + H(+). The catalysed reaction is an N-acetyl-alpha-neuraminyl-(2-&gt;3)-beta-D-galactosyl-(1-&gt;4)-N-acetyl-beta-D-glucosaminyl derivative + GDP-beta-L-fucose = an alpha-Neu5Ac-(2-&gt;3)-beta-D-Gal-(1-&gt;4)-[alpha-L-Fuc-(1-&gt;3)]-beta-D-GlcNAc derivative + GDP + H(+). It carries out the reaction an alpha-Neu5Ac-(2-&gt;3)-beta-D-Gal-(1-&gt;4)-beta-D-GlcNAc-(1-&gt;3)-beta-D-Gal-(1-&gt;4)-beta-D-GlcNAc derivative + GDP-beta-L-fucose = an alpha-Neu5Ac-(2-&gt;3)-beta-D-Gal-(1-&gt;4)-beta-D-GlcNAc-(1-&gt;3)-beta-D-Gal-(1-&gt;4)-[alpha-L-Fuc-(1-&gt;3)]-beta-D-GlcNAc derivative + GDP + H(+). It catalyses the reaction an alpha-Neu5Ac-(2-&gt;3)-beta-D-Gal-(1-&gt;4)-beta-D-GlcNAc6S derivative + GDP-beta-L-fucose = an alpha-Neu5Ac-(2-&gt;3)-beta-D-Gal-(1-&gt;4)-[alpha-L-Fuc-(1-&gt;3)]-beta-D-GlcNAc6S derivative + GDP + H(+). Its pathway is protein modification; protein glycosylation. Its function is as follows. Catalyzes alpha(1-&gt;3) linkage of fucosyl moiety transferred from GDP-beta-L-fucose to N-acetyl glucosamine (GlcNAc) within type 2 lactosamine (LacNAc, Gal-beta(1-&gt;4)GlcNAc) glycan attached to N- or O-linked glycoproteins. Robustly fucosylates nonsialylated distal LacNAc unit of the polylactosamine chain to form Lewis X antigen (CD15), a glycan determinant known to mediate important cellular functions in development and immunity. Fucosylates with lower efficiency sialylated LacNAc acceptors to form sialyl Lewis X and 6-sulfo sialyl Lewis X determinants that serve as recognition epitopes for C-type lectins. Together with FUT7 contributes to SELE, SELL and SELP selectin ligand biosynthesis and selectin-dependent lymphocyte homing, leukocyte migration and blood leukocyte homeostasis. In a cell type specific manner, may also fucosylate the internal LacNAc unit of the polylactosamine chain to form VIM-2 antigen that serves as recognition epitope for SELE. Functionally, does not generate Lewis X antigens. This is Alpha-(1,3)-fucosyltransferase 4 from Homo sapiens (Human).